Here is a 760-residue protein sequence, read N- to C-terminus: Alpha-amylase (760 aa).

A signal peptide spans 1–34 (MSKRSKLLKRRMLSLSVICVLIGYGPVFNPVRSQ). Residues Asn143, Thr184, and Asp192 each coordinate Ca(2+). Asp222 functions as the Nucleophile in the catalytic mechanism. Residue His226 coordinates Ca(2+). Glu262 acts as the Proton donor in catalysis.

Belongs to the glycosyl hydrolase 13 family. In terms of assembly, monomer. The cofactor is Ca(2+).

The catalysed reaction is Endohydrolysis of (1-&gt;4)-alpha-D-glucosidic linkages in polysaccharides containing three or more (1-&gt;4)-alpha-linked D-glucose units.. This chain is Alpha-amylase (amyA), found in Clostridium acetobutylicum (strain ATCC 824 / DSM 792 / JCM 1419 / IAM 19013 / LMG 5710 / NBRC 13948 / NRRL B-527 / VKM B-1787 / 2291 / W).